Here is a 273-residue protein sequence, read N- to C-terminus: Putative pyruvate, phosphate dikinase regulatory protein (273 aa).

153–160 is an ADP binding site; it reads GISRTSKT.

The protein belongs to the pyruvate, phosphate/water dikinase regulatory protein family. PDRP subfamily.

It carries out the reaction N(tele)-phospho-L-histidyl/L-threonyl-[pyruvate, phosphate dikinase] + ADP = N(tele)-phospho-L-histidyl/O-phospho-L-threonyl-[pyruvate, phosphate dikinase] + AMP + H(+). The catalysed reaction is N(tele)-phospho-L-histidyl/O-phospho-L-threonyl-[pyruvate, phosphate dikinase] + phosphate + H(+) = N(tele)-phospho-L-histidyl/L-threonyl-[pyruvate, phosphate dikinase] + diphosphate. In terms of biological role, bifunctional serine/threonine kinase and phosphorylase involved in the regulation of the pyruvate, phosphate dikinase (PPDK) by catalyzing its phosphorylation/dephosphorylation. In Rhizobium etli (strain ATCC 51251 / DSM 11541 / JCM 21823 / NBRC 15573 / CFN 42), this protein is Putative pyruvate, phosphate dikinase regulatory protein.